A 490-amino-acid chain; its full sequence is Argininosuccinate lyase (490 aa).

This sequence belongs to the lyase 1 family. Argininosuccinate lyase subfamily.

Its subcellular location is the cytoplasm. It catalyses the reaction 2-(N(omega)-L-arginino)succinate = fumarate + L-arginine. Its pathway is amino-acid biosynthesis; L-arginine biosynthesis; L-arginine from L-ornithine and carbamoyl phosphate: step 3/3. This chain is Argininosuccinate lyase, found in Bifidobacterium longum (strain DJO10A).